Here is a 137-residue protein sequence, read N- to C-terminus: Putative pre-16S rRNA nuclease (137 aa).

The protein belongs to the YqgF nuclease family.

The protein localises to the cytoplasm. In terms of biological role, could be a nuclease involved in processing of the 5'-end of pre-16S rRNA. The sequence is that of Putative pre-16S rRNA nuclease from Chromobacterium violaceum (strain ATCC 12472 / DSM 30191 / JCM 1249 / CCUG 213 / NBRC 12614 / NCIMB 9131 / NCTC 9757 / MK).